The chain runs to 148 residues: UPF0134 protein MPN_410 (148 aa).

Belongs to the UPF0134 family.

This Mycoplasma pneumoniae (strain ATCC 29342 / M129 / Subtype 1) (Mycoplasmoides pneumoniae) protein is UPF0134 protein MPN_410.